Here is a 213-residue protein sequence, read N- to C-terminus: Imidazole glycerol phosphate synthase subunit HisH (213 aa).

The Glutamine amidotransferase type-1 domain maps to 1–212 (MLAILDYKAG…HRYCTEAADA (212 aa)). The active-site Nucleophile is Cys79. Active-site residues include His187 and Glu189.

In terms of assembly, heterodimer of HisH and HisF.

The protein resides in the cytoplasm. It catalyses the reaction 5-[(5-phospho-1-deoxy-D-ribulos-1-ylimino)methylamino]-1-(5-phospho-beta-D-ribosyl)imidazole-4-carboxamide + L-glutamine = D-erythro-1-(imidazol-4-yl)glycerol 3-phosphate + 5-amino-1-(5-phospho-beta-D-ribosyl)imidazole-4-carboxamide + L-glutamate + H(+). The catalysed reaction is L-glutamine + H2O = L-glutamate + NH4(+). It participates in amino-acid biosynthesis; L-histidine biosynthesis; L-histidine from 5-phospho-alpha-D-ribose 1-diphosphate: step 5/9. Functionally, IGPS catalyzes the conversion of PRFAR and glutamine to IGP, AICAR and glutamate. The HisH subunit catalyzes the hydrolysis of glutamine to glutamate and ammonia as part of the synthesis of IGP and AICAR. The resulting ammonia molecule is channeled to the active site of HisF. In Nitratidesulfovibrio vulgaris (strain DP4) (Desulfovibrio vulgaris), this protein is Imidazole glycerol phosphate synthase subunit HisH.